The following is a 410-amino-acid chain: Elongation factor Tu, chloroplastic (410 aa).

The region spanning 10 to 213 (KPHLNIGTIG…TVDEYIPTPK (204 aa)) is the tr-type G domain. The segment at 19–26 (GHVDHGKT) is G1. 19–26 (GHVDHGKT) contacts GTP. Position 26 (threonine 26) interacts with Mg(2+). Residues 60–64 (GITIN) form a G2 region. The segment at 81 to 84 (DCPG) is G3. Residues 81-85 (DCPGH) and 136-139 (NKAD) each bind GTP. The interval 136-139 (NKAD) is G4. The interval 174-176 (SAI) is G5.

This sequence belongs to the TRAFAC class translation factor GTPase superfamily. Classic translation factor GTPase family. EF-Tu/EF-1A subfamily.

It localises to the plastid. The protein resides in the chloroplast. The catalysed reaction is GTP + H2O = GDP + phosphate + H(+). Its function is as follows. GTP hydrolase that promotes the GTP-dependent binding of aminoacyl-tRNA to the A-site of ribosomes during protein biosynthesis. In Codium fragile (Dead man's fingers), this protein is Elongation factor Tu, chloroplastic (tufA).